The chain runs to 236 residues: Lipoprotein NlpE (236 aa).

A signal peptide spans 1–20 (MVKKAIVTAMAVISLFTLMG). The N-palmitoyl cysteine moiety is linked to residue cysteine 21. Cysteine 21 is lipidated: S-diacylglycerol cysteine. The interval 21–100 (CNNRAEVDTL…WARTADKLVL (80 aa)) is N-terminal domain. Over 21 to 236 (CNNRAEVDTL…PNQDCSSLGQ (216 aa)) the chain is Periplasmic. The short motif at 51 to 54 (CADC) is the CXXC element. Positions 126-236 (PIESQFNYTL…PNQDCSSLGQ (111 aa)) are C-terminal domain. The segment at 144–156 (MTPMTLRGMYFYM) is could contain a copper-binding motif. Cysteines 165 and 231 form a disulfide.

Probably exists as a monomer in vivo, can however form homodimers which swap domains. Post-translationally, palmitoylated. In terms of processing, seems to only form a disulfide bond between Cys-165 and Cys-231. The 2 other cysteine residues may however be chemically active.

The protein resides in the cell outer membrane. In terms of biological role, involved in copper homeostasis, could be involved in both copper efflux and the delivery of copper to copper-dependent enzymes. Required for efficient binding of stationary phase cells to hydrophobic surfaces, part of the process of biofilm formation. Functions during envelope stress responses; when overproduced induces degP through the activation of the two-component envelope stress response system CpxA/CpxR. DegP induction seems to require membrane anchoring of this protein. Structural changes and/or interaction of the CXXC motif with its environment may lead to activation of the Cpx stress response. The sequence is that of Lipoprotein NlpE from Escherichia coli (strain K12).